The chain runs to 432 residues: Adenylosuccinate synthetase (432 aa).

Residues 13–19 (GDEGKGK) and 41–43 (GHT) contribute to the GTP site. D14 functions as the Proton acceptor in the catalytic mechanism. The Mg(2+) site is built by D14 and G41. IMP-binding positions include 14-17 (DEGK), 39-42 (NAGH), T130, R144, Q225, T240, and R304. The active-site Proton donor is the H42. Residue 300–306 (ATTGRRR) coordinates substrate. Residues R306, 332–334 (KLD), and 415–417 (STG) each bind GTP.

It belongs to the adenylosuccinate synthetase family. Homodimer. Requires Mg(2+) as cofactor.

It localises to the cytoplasm. It catalyses the reaction IMP + L-aspartate + GTP = N(6)-(1,2-dicarboxyethyl)-AMP + GDP + phosphate + 2 H(+). It functions in the pathway purine metabolism; AMP biosynthesis via de novo pathway; AMP from IMP: step 1/2. Plays an important role in the de novo pathway of purine nucleotide biosynthesis. Catalyzes the first committed step in the biosynthesis of AMP from IMP. The protein is Adenylosuccinate synthetase of Cronobacter sakazakii (strain ATCC BAA-894) (Enterobacter sakazakii).